Consider the following 97-residue polypeptide: Protein transport protein SFT1 (97 aa).

The Cytoplasmic segment spans residues Met1–Asn74. The region spanning Ser7–Ser69 is the t-SNARE coiled-coil homology domain. A helical; Anchor for type IV membrane protein transmembrane segment spans residues Ser75–Phe94. The Lumenal portion of the chain corresponds to Lys95–Phe97.

As to quaternary structure, component of a SNARE complex consisting of SED5, GOS1, YKT6 and SFT1.

The protein localises to the golgi apparatus membrane. In terms of biological role, vesicle SNARE required for retrograde transport within the Golgi complex. The sequence is that of Protein transport protein SFT1 (SFT1) from Saccharomyces cerevisiae (strain ATCC 204508 / S288c) (Baker's yeast).